The sequence spans 216 residues: N-acetyltransferase 9-like protein (216 aa).

An N-acetyltransferase domain is found at 68 to 215 (VLLNENDEAK…DHVELELMRT (148 aa)).

The protein belongs to the acetyltransferase family. GNAT subfamily.

It is found in the cytoplasm. Its subcellular location is the nucleus. This is N-acetyltransferase 9-like protein from Schizosaccharomyces pombe (strain 972 / ATCC 24843) (Fission yeast).